Consider the following 496-residue polypeptide: Pyrrole-2-carboxylic acid decarboxylase (496 aa).

Position 166 (tryptophan 166) interacts with K(+). Residues valine 168, arginine 170, glutamine 187, and histidine 188 each contribute to the prenylated FMN site. Histidine 188 contacts Mn(2+). The K(+) site is built by alanine 218, alanine 219, methionine 221, and glutamate 229. Glutamate 229 contributes to the prenylated FMN binding site. Glutamate 229 provides a ligand contact to Mn(2+). Catalysis depends on glutamate 278, which acts as the Proton donor. Histidine 386 is a prenylated FMN binding site.

The protein belongs to the UbiD family. UbiD-like/FDC subfamily. In terms of assembly, homodimer. Prenylated FMN is required as a cofactor. It depends on Mn(2+) as a cofactor. The cofactor is K(+).

It catalyses the reaction pyrrole-2-carboxylate + H(+) = 1H-pyrrole + CO2. The catalysed reaction is pyrrole-2-carboxylate + H2O = 1H-pyrrole + hydrogencarbonate. Imidazole acts as a reversible inhibitor via the formation of an imidazole-prenyl-FMN adduct. Activity is light sensitive. In terms of biological role, catalyzes the prenyl-FMN-dependent decarboxylation of pyrrole-2-carboxylate (P2C). Can also catalyze the carboxylation of pyrrole in the presence of elevated concentrations of CO(2) or bicarbonate. Can accept a modest range of heteroaromatic compounds such as 3-methylpyrrole-2-carboxylate, indole-3-carboxylate and furan-2-carboxylate, and shows very low activity with thiophene-2-carboxylate. Attenuates the virulence of P.aeruginosa in a Drosophila model when overexpressed. This chain is Pyrrole-2-carboxylic acid decarboxylase, found in Pseudomonas aeruginosa (strain ATCC 15692 / DSM 22644 / CIP 104116 / JCM 14847 / LMG 12228 / 1C / PRS 101 / PAO1).